Reading from the N-terminus, the 226-residue chain is ATP synthase F(0) complex subunit a (226 aa).

Transmembrane regions (helical) follow at residues 12–32 (PTILGLPAAVPIILFPSLLIP), 68–88 (WSLMLISLITFIATTNLLGLL), 97–117 (QLSMNLAMAIPLWAGTVATGF), 138–158 (IPMLIIIETISLFIQPVALAV), 164–184 (ITAGHLLMHLIGAATMALSTI), and 200–222 (TTLEIAVALIQAYVFTLLVSLYL).

This sequence belongs to the ATPase A chain family. As to quaternary structure, component of the ATP synthase complex composed at least of ATP5F1A/subunit alpha, ATP5F1B/subunit beta, ATP5MC1/subunit c (homooctomer), MT-ATP6/subunit a, MT-ATP8/subunit 8, ATP5ME/subunit e, ATP5MF/subunit f, ATP5MG/subunit g, ATP5MK/subunit k, ATP5MJ/subunit j, ATP5F1C/subunit gamma, ATP5F1D/subunit delta, ATP5F1E/subunit epsilon, ATP5PF/subunit F6, ATP5PB/subunit b, ATP5PD/subunit d, ATP5PO/subunit OSCP. ATP synthase complex consists of a soluble F(1) head domain (subunits alpha(3) and beta(3)) - the catalytic core - and a membrane F(0) domain - the membrane proton channel (subunits c, a, 8, e, f, g, k and j). These two domains are linked by a central stalk (subunits gamma, delta, and epsilon) rotating inside the F1 region and a stationary peripheral stalk (subunits F6, b, d, and OSCP). Interacts with DNAJC30; interaction is direct.

Its subcellular location is the mitochondrion inner membrane. It carries out the reaction H(+)(in) = H(+)(out). Functionally, subunit a, of the mitochondrial membrane ATP synthase complex (F(1)F(0) ATP synthase or Complex V) that produces ATP from ADP in the presence of a proton gradient across the membrane which is generated by electron transport complexes of the respiratory chain. ATP synthase complex consist of a soluble F(1) head domain - the catalytic core - and a membrane F(1) domain - the membrane proton channel. These two domains are linked by a central stalk rotating inside the F(1) region and a stationary peripheral stalk. During catalysis, ATP synthesis in the catalytic domain of F(1) is coupled via a rotary mechanism of the central stalk subunits to proton translocation. With the subunit c (ATP5MC1), forms the proton-conducting channel in the F(0) domain, that contains two crucial half-channels (inlet and outlet) that facilitate proton movement from the mitochondrial intermembrane space (IMS) into the matrix. Protons are taken up via the inlet half-channel and released through the outlet half-channel, following a Grotthuss mechanism. This Hylobates lar (Lar gibbon) protein is ATP synthase F(0) complex subunit a.